The following is a 292-amino-acid chain: Elongation factor Ts (292 aa).

The interval 80-83 (TDFV) is involved in Mg(2+) ion dislocation from EF-Tu.

The protein belongs to the EF-Ts family.

The protein localises to the cytoplasm. Its function is as follows. Associates with the EF-Tu.GDP complex and induces the exchange of GDP to GTP. It remains bound to the aminoacyl-tRNA.EF-Tu.GTP complex up to the GTP hydrolysis stage on the ribosome. In Limosilactobacillus fermentum (strain NBRC 3956 / LMG 18251) (Lactobacillus fermentum), this protein is Elongation factor Ts.